A 62-amino-acid polypeptide reads, in one-letter code: Large ribosomal subunit protein uL29 (62 aa).

Belongs to the universal ribosomal protein uL29 family.

In Geobacter metallireducens (strain ATCC 53774 / DSM 7210 / GS-15), this protein is Large ribosomal subunit protein uL29.